We begin with the raw amino-acid sequence, 171 residues long: Co-chaperone protein HscB homolog (171 aa).

Positions 2-74 (NYFELFGLPI…LRRAEYLLSL (73 aa)) constitute a J domain.

Belongs to the HscB family. As to quaternary structure, interacts with HscA and stimulates its ATPase activity.

Its function is as follows. Co-chaperone involved in the maturation of iron-sulfur cluster-containing proteins. Seems to help targeting proteins to be folded toward HscA. The chain is Co-chaperone protein HscB homolog from Vibrio cholerae serotype O1 (strain M66-2).